The chain runs to 335 residues: DNA-directed RNA polymerase subunit alpha (335 aa).

An alpha N-terminal domain (alpha-NTD) region spans residues 1 to 233; it reads MMLNATEFLT…QQISIFVDLE (233 aa). The segment at 247-335 is alpha C-terminal domain (alpha-CTD); that stretch reads VDPVLLRPVD…VDDRFSYRSR (89 aa).

The protein belongs to the RNA polymerase alpha chain family. As to quaternary structure, homodimer. The RNAP catalytic core consists of 2 alpha, 1 beta, 1 beta' and 1 omega subunit. When a sigma factor is associated with the core the holoenzyme is formed, which can initiate transcription.

The enzyme catalyses RNA(n) + a ribonucleoside 5'-triphosphate = RNA(n+1) + diphosphate. DNA-dependent RNA polymerase catalyzes the transcription of DNA into RNA using the four ribonucleoside triphosphates as substrates. This is DNA-directed RNA polymerase subunit alpha from Psychrobacter sp. (strain PRwf-1).